A 397-amino-acid chain; its full sequence is SET domain-containing protein 4 (397 aa).

The 217-residue stretch at 29–245 (AKLEPCRFKE…KCSEVFINYG (217 aa)) folds into the SET domain. S-adenosyl-L-methionine is bound at residue Y244.

This sequence belongs to the class V-like SAM-binding methyltransferase superfamily. SETD4 family.

The protein localises to the nucleus. It carries out the reaction L-lysyl(79)-[histone H3] + 3 S-adenosyl-L-methionine = N(6),N(6),N(6)-trimethyl-L-lysyl(79)-[histone H3] + 3 S-adenosyl-L-homocysteine + 3 H(+). The enzyme catalyses L-lysyl(20)-[histone H4] + S-adenosyl-L-methionine = N(6)-methyl-L-lysyl(20)-[histone H4] + S-adenosyl-L-homocysteine + H(+). The catalysed reaction is N(6)-methyl-L-lysyl(20)-[histone H4] + S-adenosyl-L-methionine = N(6),N(6)-dimethyl-L-lysyl(20)-[histone H4] + S-adenosyl-L-homocysteine + H(+). It catalyses the reaction N(6),N(6)-dimethyl-L-lysyl(20)-[histone H4] + S-adenosyl-L-methionine = N(6),N(6),N(6)-trimethyl-L-lysyl(20)-[histone H4] + S-adenosyl-L-homocysteine + H(+). In terms of biological role, protein-lysine N-methyltransferase involved in the regulation of cell quiescence by catalyzing the trimethylation of 'Lys-20' of histone H4 and 'Lys-79' of histone H3 (H4K20me3 and H3K79me3, respectively) during diapause formation, a state of obligate dormancy. This Artemia parthenogenetica (Brine shrimp) protein is SET domain-containing protein 4.